Reading from the N-terminus, the 487-residue chain is UDP-N-acetylmuramate--L-alanine ligase (487 aa).

124 to 130 (GTHGKTT) contributes to the ATP binding site.

It belongs to the MurCDEF family.

It localises to the cytoplasm. The enzyme catalyses UDP-N-acetyl-alpha-D-muramate + L-alanine + ATP = UDP-N-acetyl-alpha-D-muramoyl-L-alanine + ADP + phosphate + H(+). Its pathway is cell wall biogenesis; peptidoglycan biosynthesis. Functionally, cell wall formation. The protein is UDP-N-acetylmuramate--L-alanine ligase of Acaryochloris marina (strain MBIC 11017).